We begin with the raw amino-acid sequence, 489 residues long: Mitochondrial-processing peptidase subunit beta (489 aa).

Residues 1–45 constitute a mitochondrion transit peptide; the sequence is MAAAAARVVLLPAARRRLWGFSESLLIRGAAGRSSYFGENRLRST. Zn(2+) is bound at residue His-101. Glu-104 serves as the catalytic Proton acceptor. Residues His-105 and Glu-181 each coordinate Zn(2+).

This sequence belongs to the peptidase M16 family. Heterodimer of PMPCA (alpha) and PMPCB (beta) subunits, forming the mitochondrial processing protease (MPP) in which PMPCA is involved in substrate recognition and binding and PMPCB is the catalytic subunit. Requires Zn(2+) as cofactor.

The protein resides in the mitochondrion matrix. It carries out the reaction Release of N-terminal transit peptides from precursor proteins imported into the mitochondrion, typically with Arg in position P2.. With respect to regulation, binding to PMPCA is required for catalytic activity. In terms of biological role, catalytic subunit of the essential mitochondrial processing protease (MPP), which cleaves the mitochondrial sequence off newly imported precursors proteins. Preferentially, cleaves after an arginine at position P2. Required for PINK1 turnover by coupling PINK1 mitochondrial import and cleavage, which results in subsequent PINK1 proteolysis. The sequence is that of Mitochondrial-processing peptidase subunit beta (PMPCB) from Pongo abelii (Sumatran orangutan).